Here is a 492-residue protein sequence, read N- to C-terminus: Cytoplasmic dynein 1 light intermediate chain 2 (492 aa).

An ATP-binding site is contributed by 61-68 (GEDGSGKT). Disordered stretches follow at residues 188 to 207 (EEGC…GSDE), 370 to 423 (LAKQ…KNNA), and 437 to 492 (LSKK…ENEA). Phosphoserine occurs at positions 194, 383, and 391. The span at 370–383 (LAKQPATPTRTSES) shows a compositional bias: polar residues. Residue Arg-397 is modified to Omega-N-methylarginine. A compositionally biased stretch (polar residues) spans 437–469 (LSKKTGSPGSPSAGGVQSTAKKSGQKTVLSNVQ). Residue Thr-441 is modified to Phosphothreonine. A phosphoserine mark is found at Ser-443 and Ser-446. Residues 471-480 (ELDRMTRKPD) show a composition bias toward basic and acidic residues. The segment covering 482–492 (MVTNSSTENEA) has biased composition (polar residues).

This sequence belongs to the dynein light intermediate chain family. As to quaternary structure, homodimer. The cytoplasmic dynein 1 complex consists of two catalytic heavy chains (HCs) and a number of non-catalytic subunits presented by intermediate chains (ICs), light intermediate chains (LICs) and light chains (LCs); the composition seems to vary in respect to the IC, LIC and LC composition. The heavy chain homodimer serves as a scaffold for the probable homodimeric assembly of the respective non-catalytic subunits. The ICs and LICs bind directly to the HC dimer and the LCs assemble on the IC dimer. Interacts with DYNC1H1; DYNC1LI1 and DYNC1LI2 bind mutually exclusive to DYNC1H.

It localises to the cytoplasm. It is found in the cytoskeleton. In terms of biological role, acts as one of several non-catalytic accessory components of the cytoplasmic dynein 1 complex that are thought to be involved in linking dynein to cargos and to adapter proteins that regulate dynein function. Cytoplasmic dynein 1 acts as a motor for the intracellular retrograde motility of vesicles and organelles along microtubules. May play a role in binding dynein to membranous organelles or chromosomes. The protein is Cytoplasmic dynein 1 light intermediate chain 2 (Dync1li2) of Mus musculus (Mouse).